The sequence spans 271 residues: Ferric vulnibactin reductase VuuB (271 aa).

Residues 8–131 enclose the FAD-binding FR-type domain; sequence VYPMLLDFVR…IGPAGPDPLI (124 aa).

It belongs to the SIP oxidoreductase family. Monomer. FAD is required as a cofactor.

The protein localises to the cytoplasm. It carries out the reaction 2 a Fe(II)-siderophore + NAD(+) + H(+) = 2 a Fe(III)-siderophore + NADH. Ferric-siderophore reductase involved in iron removal from the siderophores after their transport into the cell. Acts as a major ferric-vulnibactin reductase catalyzing the reduction of Fe(3+)-vulnibactin, a catecholate siderophore synthesized by V.vulnificus. The chain is Ferric vulnibactin reductase VuuB from Vibrio vulnificus (strain CMCP6).